Consider the following 414-residue polypeptide: Serine hydroxymethyltransferase (414 aa).

Residues leucine 121 and 125 to 127 (GHL) contribute to the (6S)-5,6,7,8-tetrahydrofolate site. N6-(pyridoxal phosphate)lysine is present on lysine 230.

The protein belongs to the SHMT family. As to quaternary structure, homodimer. Pyridoxal 5'-phosphate is required as a cofactor.

Its subcellular location is the cytoplasm. It catalyses the reaction (6R)-5,10-methylene-5,6,7,8-tetrahydrofolate + glycine + H2O = (6S)-5,6,7,8-tetrahydrofolate + L-serine. Its pathway is one-carbon metabolism; tetrahydrofolate interconversion. It functions in the pathway amino-acid biosynthesis; glycine biosynthesis; glycine from L-serine: step 1/1. Catalyzes the reversible interconversion of serine and glycine with tetrahydrofolate (THF) serving as the one-carbon carrier. This reaction serves as the major source of one-carbon groups required for the biosynthesis of purines, thymidylate, methionine, and other important biomolecules. Also exhibits THF-independent aldolase activity toward beta-hydroxyamino acids, producing glycine and aldehydes, via a retro-aldol mechanism. The polypeptide is Serine hydroxymethyltransferase (Acidithiobacillus ferrooxidans (strain ATCC 23270 / DSM 14882 / CIP 104768 / NCIMB 8455) (Ferrobacillus ferrooxidans (strain ATCC 23270))).